A 410-amino-acid chain; its full sequence is Peptidase T (410 aa).

Residue H79 coordinates Zn(2+). The active site involves D81. D142 lines the Zn(2+) pocket. Residue E176 is the Proton acceptor of the active site. Positions 177, 199, and 381 each coordinate Zn(2+).

This sequence belongs to the peptidase M20B family. The cofactor is Zn(2+).

It localises to the cytoplasm. It catalyses the reaction Release of the N-terminal residue from a tripeptide.. Functionally, cleaves the N-terminal amino acid of tripeptides. The chain is Peptidase T from Bacillus licheniformis (strain ATCC 14580 / DSM 13 / JCM 2505 / CCUG 7422 / NBRC 12200 / NCIMB 9375 / NCTC 10341 / NRRL NRS-1264 / Gibson 46).